Here is a 311-residue protein sequence, read N- to C-terminus: p-hydroxybenzoic acid efflux pump subunit AaeA (311 aa).

A helical transmembrane segment spans residues 11–31; sequence IAITLILVLLGIIAIFKAWVF.

This sequence belongs to the membrane fusion protein (MFP) (TC 8.A.1) family.

It localises to the cell inner membrane. Functionally, forms an efflux pump with AaeB. This is p-hydroxybenzoic acid efflux pump subunit AaeA from Serratia proteamaculans (strain 568).